Reading from the N-terminus, the 288-residue chain is S-methyl-5'-thioadenosine phosphorylase (288 aa).

Phosphate contacts are provided by residues Ser-10, 52–53, and 85–86; these read RH and TA. Met-188 lines the substrate pocket. Thr-189 lines the phosphate pocket. 212-214 serves as a coordination point for substrate; sequence DYD.

The protein belongs to the PNP/MTAP phosphorylase family. MTAP subfamily. Homotrimer.

The protein resides in the cytoplasm. The protein localises to the nucleus. It carries out the reaction S-methyl-5'-thioadenosine + phosphate = 5-(methylsulfanyl)-alpha-D-ribose 1-phosphate + adenine. It participates in amino-acid biosynthesis; L-methionine biosynthesis via salvage pathway; S-methyl-5-thio-alpha-D-ribose 1-phosphate from S-methyl-5'-thioadenosine (phosphorylase route): step 1/1. Its function is as follows. Catalyzes the reversible phosphorylation of S-methyl-5'-thioadenosine (MTA) to adenine and 5-methylthioribose-1-phosphate. Involved in the breakdown of MTA, a major by-product of polyamine biosynthesis. Responsible for the first step in the methionine salvage pathway after MTA has been generated from S-adenosylmethionine. Has broad substrate specificity with 6-aminopurine nucleosides as preferred substrates. This chain is S-methyl-5'-thioadenosine phosphorylase, found in Caenorhabditis elegans.